A 906-amino-acid polypeptide reads, in one-letter code: Protein translocase subunit SecA (906 aa).

ATP-binding positions include Gln86, 104–108, and Asp499; that span reads GEGKT. Positions 862-885 are disordered; that stretch reads KPVVSRIDPKDRNPDDPTSWGRVS. Zn(2+) contacts are provided by Cys890, Cys892, Cys901, and His902.

It belongs to the SecA family. Monomer and homodimer. Part of the essential Sec protein translocation apparatus which comprises SecA, SecYEG and auxiliary proteins SecDF-YajC and YidC. The cofactor is Zn(2+).

Its subcellular location is the cell inner membrane. The protein localises to the cytoplasm. It catalyses the reaction ATP + H2O + cellular proteinSide 1 = ADP + phosphate + cellular proteinSide 2.. Its function is as follows. Part of the Sec protein translocase complex. Interacts with the SecYEG preprotein conducting channel. Has a central role in coupling the hydrolysis of ATP to the transfer of proteins into and across the cell membrane, serving both as a receptor for the preprotein-SecB complex and as an ATP-driven molecular motor driving the stepwise translocation of polypeptide chains across the membrane. In Rickettsia massiliae (strain Mtu5), this protein is Protein translocase subunit SecA.